Reading from the N-terminus, the 350-residue chain is Protein TRIGALACTOSYLDIACYLGLYCEROL 1, chloroplastic (350 aa).

The segment at 67 to 86 (SMSMLEEETSTENNAPSQEA) is disordered. Residues 98-117 (YIWRGLSVPIIAGQVVLRIL) form a helical membrane-spanning segment. At 118-136 (KGKIHWRNTLQQLERTGPK) the chain is on the stromal side. The chain crosses the membrane as a helical span at residues 137–157 (SLGVCLLTSTFVGMAFTIQFV). The Chloroplast intermembrane portion of the chain corresponds to 158–168 (REFTRLGLNRS). Residues 169–189 (IGGVLALAFSRELSPVITSIV) traverse the membrane as a helical segment. Residues 190-229 (VAGRMGSAFAAELGTMQVSEQTDTLRVLGADPIDYLITPR) are Stromal-facing. A helical membrane pass occupies residues 230-250 (VIASCLALPFLTLMCFTVGMA). Residues 251–288 (SSALLSDAVYGISINIIMDSAHRALRPWDIVSAMIKSQ) are Chloroplast intermembrane-facing. A helical membrane pass occupies residues 289–309 (VFGAIISVISCSWGVTTTGGA). Over 310 to 318 (KGVGESTTS) the chain is Stromal. A helical transmembrane segment spans residues 319 to 339 (AVVMSLVGIFIADFVLSSFFF). Topologically, residues 340 to 350 (QGAGDSLKNCV) are chloroplast intermembrane.

The protein belongs to the MlaE permease family. Permease subunit of the TGD complex, a lipid translocator at the inner chloroplast envelope membrane made of TGD1, TGD2 and TGD3. Interacts with TGD2 and TGD3 with an overall subunit stoichiometry of 2 TGD1, 2 TGD3 and 8 to 12 TGD2. Interacts with TGD5. As to expression, high levels in green tissues, but low levels in nongreen tissues such as roots.

It is found in the plastid. The protein resides in the chloroplast inner membrane. Required during embryogenesis. Permease involved in lipid transfer from the endoplasmic reticulum (ER) to plastids, and necessary for thylakoids formation. This chain is Protein TRIGALACTOSYLDIACYLGLYCEROL 1, chloroplastic, found in Arabidopsis thaliana (Mouse-ear cress).